Consider the following 143-residue polypeptide: Nucleoside diphosphate kinase (143 aa).

The ATP site is built by lysine 11, phenylalanine 59, arginine 87, threonine 93, arginine 104, and asparagine 114. Catalysis depends on histidine 117, which acts as the Pros-phosphohistidine intermediate.

The protein belongs to the NDK family. As to quaternary structure, homotetramer. It depends on Mg(2+) as a cofactor.

The protein localises to the cytoplasm. The catalysed reaction is dZDP + ATP = dZTP + ADP. It catalyses the reaction a 2'-deoxyribonucleoside 5'-diphosphate + ATP = a 2'-deoxyribonucleoside 5'-triphosphate + ADP. The enzyme catalyses a ribonucleoside 5'-diphosphate + ATP = a ribonucleoside 5'-triphosphate + ADP. It functions in the pathway purine metabolism. Major role in the synthesis of nucleoside triphosphates other than ATP. The ATP gamma phosphate is transferred to the NDP beta phosphate via a ping-pong mechanism, using a phosphorylated active-site intermediate. In terms of biological role, (Microbial infection) Catalyzes the phosphorylation of dZDP to dZTP, when the bacterium is infected by a phage that produces the substrate for the synthesis of dZTP (2- amino-2'-deoxyadenosine 5'-triphosphate), which is then used by the phage as a DNA polymerase substrate. The protein is Nucleoside diphosphate kinase of Acinetobacter baumannii (strain AB307-0294).